The sequence spans 283 residues: Phosphatidylserine decarboxylase proenzyme (283 aa).

Residues D90, H143, and S248 each act as charge relay system; for autoendoproteolytic cleavage activity in the active site. Residue S248 is the Schiff-base intermediate with substrate; via pyruvic acid; for decarboxylase activity of the active site. Residue S248 is modified to Pyruvic acid (Ser); by autocatalysis.

It belongs to the phosphatidylserine decarboxylase family. PSD-B subfamily. Prokaryotic type I sub-subfamily. As to quaternary structure, heterodimer of a large membrane-associated beta subunit and a small pyruvoyl-containing alpha subunit. The cofactor is pyruvate. Post-translationally, is synthesized initially as an inactive proenzyme. Formation of the active enzyme involves a self-maturation process in which the active site pyruvoyl group is generated from an internal serine residue via an autocatalytic post-translational modification. Two non-identical subunits are generated from the proenzyme in this reaction, and the pyruvate is formed at the N-terminus of the alpha chain, which is derived from the carboxyl end of the proenzyme. The autoendoproteolytic cleavage occurs by a canonical serine protease mechanism, in which the side chain hydroxyl group of the serine supplies its oxygen atom to form the C-terminus of the beta chain, while the remainder of the serine residue undergoes an oxidative deamination to produce ammonia and the pyruvoyl prosthetic group on the alpha chain. During this reaction, the Ser that is part of the protease active site of the proenzyme becomes the pyruvoyl prosthetic group, which constitutes an essential element of the active site of the mature decarboxylase.

The protein resides in the cell membrane. The catalysed reaction is a 1,2-diacyl-sn-glycero-3-phospho-L-serine + H(+) = a 1,2-diacyl-sn-glycero-3-phosphoethanolamine + CO2. It participates in phospholipid metabolism; phosphatidylethanolamine biosynthesis; phosphatidylethanolamine from CDP-diacylglycerol: step 2/2. Catalyzes the formation of phosphatidylethanolamine (PtdEtn) from phosphatidylserine (PtdSer). In Francisella tularensis subsp. holarctica (strain OSU18), this protein is Phosphatidylserine decarboxylase proenzyme.